The chain runs to 453 residues: Exodeoxyribonuclease 7 large subunit (453 aa).

The protein belongs to the XseA family. In terms of assembly, heterooligomer composed of large and small subunits.

Its subcellular location is the cytoplasm. The enzyme catalyses Exonucleolytic cleavage in either 5'- to 3'- or 3'- to 5'-direction to yield nucleoside 5'-phosphates.. Functionally, bidirectionally degrades single-stranded DNA into large acid-insoluble oligonucleotides, which are then degraded further into small acid-soluble oligonucleotides. This chain is Exodeoxyribonuclease 7 large subunit, found in Rickettsia typhi (strain ATCC VR-144 / Wilmington).